A 354-amino-acid chain; its full sequence is Phospho-N-acetylmuramoyl-pentapeptide-transferase (354 aa).

10 consecutive transmembrane segments (helical) span residues 23-43 (FSFF…IAWA), 66-86 (TPTM…LLCA), 88-108 (LDNV…ALGF), 130-150 (LAVQ…HGEL), 161-181 (FALL…IVAA), 193-213 (GLAS…AYIC), 230-250 (VGET…FLWF), 257-277 (VFMG…MGVM), 282-302 (ILLI…ILQV), and 331-351 (KIIV…LTAL).

The protein belongs to the glycosyltransferase 4 family. MraY subfamily. The cofactor is Mg(2+).

Its subcellular location is the cell inner membrane. It carries out the reaction UDP-N-acetyl-alpha-D-muramoyl-L-alanyl-gamma-D-glutamyl-meso-2,6-diaminopimeloyl-D-alanyl-D-alanine + di-trans,octa-cis-undecaprenyl phosphate = di-trans,octa-cis-undecaprenyl diphospho-N-acetyl-alpha-D-muramoyl-L-alanyl-D-glutamyl-meso-2,6-diaminopimeloyl-D-alanyl-D-alanine + UMP. It functions in the pathway cell wall biogenesis; peptidoglycan biosynthesis. Functionally, catalyzes the initial step of the lipid cycle reactions in the biosynthesis of the cell wall peptidoglycan: transfers peptidoglycan precursor phospho-MurNAc-pentapeptide from UDP-MurNAc-pentapeptide onto the lipid carrier undecaprenyl phosphate, yielding undecaprenyl-pyrophosphoryl-MurNAc-pentapeptide, known as lipid I. The sequence is that of Phospho-N-acetylmuramoyl-pentapeptide-transferase from Campylobacter curvus (strain 525.92).